Here is a 282-residue protein sequence, read N- to C-terminus: ADP-ribosyl cyclase/cyclic ADP-ribose hydrolase (282 aa).

The N-terminal stretch at 1–24 is a signal peptide; that stretch reads MSPVAIVACVCLAVTLTRISPSEA. Intrachain disulfides connect Cys-39–Cys-58, Cys-75–Cys-155, Cys-136–Cys-149, Cys-230–Cys-251, and Cys-263–Cys-272.

It belongs to the ADP-ribosyl cyclase family. In terms of tissue distribution, ovotestis.

It localises to the cytoplasmic vesicle. The catalysed reaction is NAD(+) = cyclic ADP-beta-D-ribose + nicotinamide + H(+). The enzyme catalyses NAD(+) + H2O = ADP-D-ribose + nicotinamide + H(+). It carries out the reaction nicotinate + NADP(+) = nicotinate-adenine dinucleotide phosphate + nicotinamide. With respect to regulation, activity is presumably regulated by its sequestration in vesicles before egg fertilization. After fertilization and upon NADase release, it could then be regulated via its potential phosphorylation sites. In terms of biological role, synthesizes cyclic ADP-ribose (cADPR), a second messenger for calcium mobilization from endoplasmic reticulum. Might make the Ca(2+) mobilizer nicotinate-adenine dinucleotide phosphate. Does not have cADPR hydrolase activity. The polypeptide is ADP-ribosyl cyclase/cyclic ADP-ribose hydrolase (Aplysia kurodai (Kuroda's sea hare)).